The primary structure comprises 210 residues: Protein GET1 (210 aa).

Residues 1–4 (MASL) are Lumenal-facing. The helical transmembrane segment at 5-24 (LIIVFLSHVVTYLINTIGAT) threads the bilayer. Residues 25-110 (TVDNLLWLLY…SFDLTVKSVR (86 aa)) are Cytoplasmic-facing. The stretch at 43–97 (RTAVEQRRLKGEVVQLKREMKSTSSQDEFAKWAKLRRRHDKAMEEYEAKNKALGK) forms a coiled coil. A helical transmembrane segment spans residues 111-131 (FFSTTGLKFFLQFWYSKTPMF). The Lumenal segment spans residues 132–155 (ELPRGWVPWQVEWVLSFPRAPLGT). Residues 156–172 (VSIQVWSGVCTTVVSLA) traverse the membrane as a helical segment. Over 173-210 (GDALGVVIQSLILKMTKRGVARTSEGRPSQPMALKKEL) the chain is Cytoplasmic.

Belongs to the WRB/GET1 family. Interacts with GET3.

It is found in the endoplasmic reticulum membrane. Its function is as follows. Required for the post-translational delivery of tail-anchored (TA) proteins to the endoplasmic reticulum. Acts as a membrane receptor for soluble GET3, which recognizes and selectively binds the transmembrane domain of TA proteins in the cytosol. This Uncinocarpus reesii (strain UAMH 1704) protein is Protein GET1.